The chain runs to 498 residues: O-methyltransferase OME1 (498 aa).

A compositionally biased stretch (polar residues) spans 1–19; that stretch reads MSTMALHRTASTKSDTTMA. Disordered stretches follow at residues 1 to 23 and 42 to 83; these read MSTM…CPNG and HRAE…QPEY. Positions 50-65 are enriched in low complexity; that stretch reads SSTSSVSTTPTSPSFS. Aspartate 358 provides a ligand contact to S-adenosyl-L-methionine. Histidine 406 acts as the Proton acceptor in catalysis.

The protein belongs to the class I-like SAM-binding methyltransferase superfamily. Cation-independent O-methyltransferase family.

It functions in the pathway secondary metabolite biosynthesis. Its function is as follows. O-methyltransferase; part of the gene cluster that mediates the biosynthesis of a tyrosine-derived cytochalasan acting as a fungal signal recognized by resistant rice plants and leads to avirulence in Pi33 resistant rice cultivars. The first step in the pathway is catalyzed by the hybrid PKS-NRPS ACE1, assisted by the enoyl reductase RAP1, that are responsible for fusion of the tyrosine precursor and the polyketide backbone. The polyketide synthase module (PKS) of ACE1 is responsible for the synthesis of the polyketide backbone and the downstream nonribosomal peptide synthetase (NRPS) amidates the carboxyl end of the polyketide with the tyrosine precursor. Because ACE1 lacks a designated enoylreductase (ER) domain, the required activity is provided the enoyl reductase RAP1. Reduction by the hydrolyase ORFZ, followed by dehydration and intra-molecular Diels-Alder cyclization by the Diels-Alderase ORF3 then yield the required isoindolone-fused macrocycle. A number of oxidative steps catalyzed by the tailoring enzymes identified within the cluster, including cytochrome P450 monooxygenases CYP1 to CYP4, the FAD-linked oxidoreductase OXR2 and the short-chain dehydrogenase/reductase OXR1, are further required to afford the final cytochalasans that confer avirulence and which have still to be identified. The monooxygenase CYP1 has been shown to be a site-selective C-18 hydroxylase whereas the function of CYP3 is the site-selective epoxidation of the C-6/C-7 olefin that is present in some intermediate compounds. Finally, SYN2 and RAP2 are not required for avirulence in Pi33 resistant rice cultivars. The protein is O-methyltransferase OME1 of Pyricularia oryzae (strain 70-15 / ATCC MYA-4617 / FGSC 8958) (Rice blast fungus).